Consider the following 154-residue polypeptide: 3-dehydroquinate dehydratase 2 (154 aa).

Residue Y23 is the Proton acceptor of the active site. N79, H85, and D92 together coordinate substrate. The Proton donor role is filled by H105. Residues 106-107 (IS) and R116 each bind substrate.

Belongs to the type-II 3-dehydroquinase family. As to quaternary structure, homododecamer.

The catalysed reaction is 3-dehydroquinate = 3-dehydroshikimate + H2O. Its pathway is metabolic intermediate biosynthesis; chorismate biosynthesis; chorismate from D-erythrose 4-phosphate and phosphoenolpyruvate: step 3/7. Catalyzes a trans-dehydration via an enolate intermediate. This Ralstonia nicotianae (strain ATCC BAA-1114 / GMI1000) (Ralstonia solanacearum) protein is 3-dehydroquinate dehydratase 2 (aroQ2).